We begin with the raw amino-acid sequence, 31 residues long: Dermaseptin-7.1TR (31 aa).

Gln31 carries the glutamine amide modification.

Expressed by the skin glands.

The protein localises to the secreted. Has antimicrobial activity. In Phyllomedusa trinitatis (Trinidad leaf frog), this protein is Dermaseptin-7.1TR.